We begin with the raw amino-acid sequence, 44 residues long: Large ribosomal subunit protein bL34 (44 aa).

Composition is skewed to basic residues over residues Met1–Lys14 and Leu31–Val44. The disordered stretch occupies residues Met1–Val44.

This sequence belongs to the bacterial ribosomal protein bL34 family.

This chain is Large ribosomal subunit protein bL34, found in Gloeobacter violaceus (strain ATCC 29082 / PCC 7421).